The sequence spans 508 residues: Bifunctional purine biosynthesis protein PurH (508 aa).

Residues 1–145 enclose the MGS-like domain; sequence MAKKALISVS…KNYKYVTILV (145 aa).

Belongs to the PurH family.

It catalyses the reaction (6R)-10-formyltetrahydrofolate + 5-amino-1-(5-phospho-beta-D-ribosyl)imidazole-4-carboxamide = 5-formamido-1-(5-phospho-D-ribosyl)imidazole-4-carboxamide + (6S)-5,6,7,8-tetrahydrofolate. The enzyme catalyses IMP + H2O = 5-formamido-1-(5-phospho-D-ribosyl)imidazole-4-carboxamide. The protein operates within purine metabolism; IMP biosynthesis via de novo pathway; 5-formamido-1-(5-phospho-D-ribosyl)imidazole-4-carboxamide from 5-amino-1-(5-phospho-D-ribosyl)imidazole-4-carboxamide (10-formyl THF route): step 1/1. Its pathway is purine metabolism; IMP biosynthesis via de novo pathway; IMP from 5-formamido-1-(5-phospho-D-ribosyl)imidazole-4-carboxamide: step 1/1. The protein is Bifunctional purine biosynthesis protein PurH of Thermoanaerobacter sp. (strain X514).